A 494-amino-acid chain; its full sequence is Cytochrome P450 71D94 (494 aa).

Residues 1–21 (MELNLLLVIIILVATYTVSLL) form a helical; Signal-anchor for type II membrane protein membrane-spanning segment. C434 is a heme binding site.

The protein belongs to the cytochrome P450 family. Requires heme as cofactor.

Its subcellular location is the endoplasmic reticulum membrane. Its function is as follows. Cytochrome P450 oxygenase of undefined substrate. Not active with limonene, (+)- or (-)-piperitone, (-)-isopiperitone, piperitenone or (+)-pulegone. This is Cytochrome P450 71D94 (CYP71D94) from Mentha gracilis (Gingermint).